The primary structure comprises 691 residues: Elongation factor G (691 aa).

Residues 8–282 (EKTRNIGIMA…AVVDYLPSPV (275 aa)) enclose the tr-type G domain. Residues 17 to 24 (AHIDAGKT), 81 to 85 (DTPGH), and 135 to 138 (NKMD) each bind GTP.

Belongs to the TRAFAC class translation factor GTPase superfamily. Classic translation factor GTPase family. EF-G/EF-2 subfamily.

It localises to the cytoplasm. In terms of biological role, catalyzes the GTP-dependent ribosomal translocation step during translation elongation. During this step, the ribosome changes from the pre-translocational (PRE) to the post-translocational (POST) state as the newly formed A-site-bound peptidyl-tRNA and P-site-bound deacylated tRNA move to the P and E sites, respectively. Catalyzes the coordinated movement of the two tRNA molecules, the mRNA and conformational changes in the ribosome. This chain is Elongation factor G, found in Caldicellulosiruptor bescii (strain ATCC BAA-1888 / DSM 6725 / KCTC 15123 / Z-1320) (Anaerocellum thermophilum).